The sequence spans 82 residues: Probable [Fe-S]-dependent transcriptional repressor (82 aa).

Residues Cys56, Cys61, Cys64, and Cys71 each coordinate iron-sulfur cluster.

This sequence belongs to the FeoC family.

Functionally, may function as a transcriptional regulator that controls feoABC expression. The polypeptide is Probable [Fe-S]-dependent transcriptional repressor (Yersinia enterocolitica serotype O:8 / biotype 1B (strain NCTC 13174 / 8081)).